The chain runs to 236 residues: WUSCHEL-related homeobox 4 (236 aa).

The homeobox; WUS-type DNA-binding region spans 88-152 (AGTTRWNPSA…NHKARERQKQ (65 aa)). Residues 169-188 (PATANETKEAPEKKEKDVED) are disordered. Basic and acidic residues predominate over residues 174-187 (ETKEAPEKKEKDVE).

This sequence belongs to the WUS homeobox family.

The protein resides in the nucleus. In terms of biological role, transcription factor which may be involved in developmental processes. This is WUSCHEL-related homeobox 4 (WOX4) from Oryza sativa subsp. indica (Rice).